Here is a 403-residue protein sequence, read N- to C-terminus: Phosphoglycerate kinase (403 aa).

Residues 21-23, Arg37, 60-63, Arg125, and Arg158 contribute to the substrate site; these read DFN and HLGR. Residues Lys209, Glu332, and 359–362 contribute to the ATP site; that span reads GGDS.

It belongs to the phosphoglycerate kinase family. In terms of assembly, monomer.

Its subcellular location is the cytoplasm. The enzyme catalyses (2R)-3-phosphoglycerate + ATP = (2R)-3-phospho-glyceroyl phosphate + ADP. The protein operates within carbohydrate degradation; glycolysis; pyruvate from D-glyceraldehyde 3-phosphate: step 2/5. In Koribacter versatilis (strain Ellin345), this protein is Phosphoglycerate kinase.